Reading from the N-terminus, the 590-residue chain is Probable serine/threonine-protein phosphatase PP2A regulatory subunit (590 aa).

HEAT repeat units lie at residues 37 to 73 (LSTI…VLAE), 74 to 111 (QLGN…DKAV), 113 to 150 (SLRK…TSAC), 151 to 188 (GLFS…RAAA), 189 to 227 (AKLG…LLTV), 228 to 266 (ESAI…YMVA), 267 to 305 (EKLI…CAAT), 306 to 344 (QRLQ…QLVK), 349 to 387 (GVIM…LNII), 388 to 426 (SSLD…LAIV), 427 to 465 (QFMP…EAST), 466 to 504 (LIMK…MTCL), 505 to 543 (FCLN…FNAA), and 544 to 582 (KSLK…YFSE).

It belongs to the phosphatase 2A regulatory subunit A family. In terms of assembly, part of a complex consisting of a common heterodimeric core enzyme, composed of catalytic subunit let-92 and constant regulatory subunit paa-1, that associates with a variety of regulatory subunits which confer distinct properties to the holoenzyme. Interacts with rsa-1.

The protein localises to the cytoplasm. It localises to the cytoskeleton. It is found in the microtubule organizing center. The protein resides in the centrosome. Its subcellular location is the spindle. Acts as a scaffolding protein for phosphatase let-92 and its regulatory subunits. Probably together with let-92 and regulatory subunit sur-6, regulates centriole duplication, microtubule outgrowth and mitotic spindle stability during early embryonic cell division by preventing the degradation of sas-5 and kinase zyg-1. During vulva development, may play a role with phosphatase let-92 and regulatory subunit sur-6 in the induction of vulva cell precursors by positively regulating let-60/Ras-MAP kinase signaling, probably by promoting lin-45 activation. Plays a positive role in axon guidance probably by inhibiting phosphatase let-92. The protein is Probable serine/threonine-protein phosphatase PP2A regulatory subunit (paa-1) of Caenorhabditis elegans.